The following is a 545-amino-acid chain: EH domain-containing protein 1 (545 aa).

EF-hand domains lie at 14–49 and 50–83; these read ENQM…SNLP and RPEL…VSLA. Residues 15–93 enclose the EH domain; it reads NQMIYKEWFE…QTGHEISHEV (79 aa). The Ca(2+) site is built by D27, D29, D31, R33, D38, D61, Y67, and E72. The Dynamin-type G domain maps to 194 to 429; that stretch reads FDAKPMVMLL…DLLADLKDIP (236 aa). The G1 motif stretch occupies residues 204-211; sequence GQYSTGKT. Position 204–211 (204–211) interacts with GTP; the sequence is GQYSTGKT. The G2 motif stretch occupies residues 230–231; it reads EP. The segment at 292–295 is G3 motif; the sequence is DTPG. Residues 309–313 and K359 each bind GTP; that span reads DFTGV. Positions 358 to 361 are G4 motif; the sequence is NKAD. Position 382 (V382) is a region of interest, G5 motif. A GTP-binding site is contributed by 395 to 398; the sequence is SFSD. The stretch at 467 to 490 forms a coiled coil; the sequence is KAKAQQKLIDNLEDEFGKVQREHH.

It belongs to the TRAFAC class dynamin-like GTPase superfamily. Dynamin/Fzo/YdjA family. EHD subfamily. As to quaternary structure, homooligomer, and heterooligomer with EHD2.

It is found in the endosome membrane. It localises to the cell membrane. Its subcellular location is the cytoplasm. The catalysed reaction is GTP + H2O = GDP + phosphate + H(+). Involved in endocytosis positive regulation. Acts in early endocytic membrane fusion and membrane trafficking of recycling endosomes. Confers salt tolerance. The chain is EH domain-containing protein 1 from Arabidopsis thaliana (Mouse-ear cress).